A 233-amino-acid polypeptide reads, in one-letter code: Low affinity immunoglobulin gamma Fc region receptor III-B (233 aa).

The signal sequence occupies residues 1 to 16 (MWQLLLPTALLLLVSA). Ig-like C2-type domains follow at residues 40–96 (KDSV…LSTL) and 121–179 (EDPI…VGSK). A disulfide bond links cysteine 47 and cysteine 89. N-linked (GlcNAc...) asparagine glycosylation is found at asparagine 56, asparagine 63, asparagine 82, and asparagine 92. Cysteine 128 and cysteine 172 are oxidised to a cystine. Residues asparagine 180 and asparagine 187 are each glycosylated (N-linked (GlcNAc...) asparagine). Serine 200 carries GPI-anchor amidated serine lipidation. A propeptide spans 201-233 (SFSPPGYQVSFCLVMVLLFAVDTGLYFSVKTNI) (removed in mature form).

As to quaternary structure, monomer. Interacts with INPP5D/SHIP1. Glycosylated. Glycosylation plays an inhibitory role in the interaction with IgG3. In terms of processing, the soluble form is produced by a proteolytic cleavage. Expressed specifically by polymorphonuclear leukocytes (neutrophils). Also expressed by stimulated eosinophils.

Its subcellular location is the cell membrane. The protein resides in the secreted. In terms of biological role, receptor for the Fc region of immunoglobulins gamma. Low affinity receptor. Binds complexed or aggregated IgG and also monomeric IgG. Contrary to III-A, is not capable to mediate antibody-dependent cytotoxicity and phagocytosis. May serve as a trap for immune complexes in the peripheral circulation which does not activate neutrophils. The chain is Low affinity immunoglobulin gamma Fc region receptor III-B (FCGR3B) from Homo sapiens (Human).